The sequence spans 364 residues: DNA polymerase IV (364 aa).

One can recognise a UmuC domain in the interval 6–194 (VFHIDFDYFY…LKIRDIPGIG (189 aa)). 2 residues coordinate Mg(2+): D10 and D111. Residue E112 is part of the active site.

It belongs to the DNA polymerase type-Y family. In terms of assembly, monomer. It depends on Mg(2+) as a cofactor.

The protein resides in the cytoplasm. The enzyme catalyses DNA(n) + a 2'-deoxyribonucleoside 5'-triphosphate = DNA(n+1) + diphosphate. Functionally, poorly processive, error-prone DNA polymerase involved in untargeted mutagenesis. Copies undamaged DNA at stalled replication forks, which arise in vivo from mismatched or misaligned primer ends. These misaligned primers can be extended by PolIV. Exhibits no 3'-5' exonuclease (proofreading) activity. May be involved in translesional synthesis. This chain is DNA polymerase IV, found in Nitrosopumilus maritimus (strain SCM1).